The primary structure comprises 463 residues: D(5)-like dopamine receptor (463 aa).

At 1–39 (MENFYNETEPTEPRGGVDPLRVVTAAEDVPAPVGGVSVR) the chain is on the extracellular side. Asparagine 6 is a glycosylation site (N-linked (GlcNAc...) asparagine). Residues 40 to 65 (ALTGCVLCALIVSTLLGNTLVCAAVI) traverse the membrane as a helical segment. Residues 66–76 (KFRHLRSKVTN) lie on the Cytoplasmic side of the membrane. Residues 77–103 (AFVVSLAVSDLFVAVLVMPWRAVSEVA) form a helical membrane-spanning segment. At 104 to 112 (GVWLFGRFC) the chain is on the extracellular side. A disulfide bond links cysteine 112 and cysteine 194. A helical membrane pass occupies residues 113–135 (DTWVAFDIMCSTASILNLCVISM). At 136–154 (DRYWAISNPFRYERRMTRR) the chain is on the cytoplasmic side. The chain crosses the membrane as a helical span at residues 155–180 (FAFLMIAVAWTLSVLISFIPVQLNWH). At 181–198 (RADNNSSAHEQGDCNASL) the chain is on the extracellular side. Residues 199–223 (NRTYAISSSLISFYIPVLIMVGTYT) traverse the membrane as a helical segment. Over 224-273 (RIFRIAQTQIRRISSLERAAGQRAQNQSHRASTHDESALKTSFKRETKVL) the chain is Cytoplasmic. The chain crosses the membrane as a helical span at residues 274-301 (KTLSVIMGVFVFCWLPFFVLNCVVPFCD). Over 302 to 315 (VDKVGEPPCVSDTT) the chain is Extracellular. The chain crosses the membrane as a helical span at residues 316–337 (FNIFVWFGWANSSLNPVIYAFN). Residues 338-463 (ADFRKAFTTI…PGQIQDLGDL (126 aa)) lie on the Cytoplasmic side of the membrane.

The protein belongs to the G-protein coupled receptor 1 family.

It is found in the cell membrane. Its function is as follows. Receptor for dopamine. The protein is D(5)-like dopamine receptor (dl) of Takifugu rubripes (Japanese pufferfish).